A 386-amino-acid chain; its full sequence is Eukaryotic translation initiation factor 3 subunit M (386 aa).

Residues 181–343 enclose the PCI domain; the sequence is NSELASKVMI…RKVHISSTMH (163 aa).

The protein belongs to the eIF-3 subunit M family. Component of the eukaryotic translation initiation factor 3 (eIF-3) complex.

Its subcellular location is the cytoplasm. Functionally, component of the eukaryotic translation initiation factor 3 (eIF-3) complex, which is involved in protein synthesis of a specialized repertoire of mRNAs and, together with other initiation factors, stimulates binding of mRNA and methionyl-tRNAi to the 40S ribosome. The eIF-3 complex specifically targets and initiates translation of a subset of mRNAs involved in cell proliferation. The polypeptide is Eukaryotic translation initiation factor 3 subunit M (Culex quinquefasciatus (Southern house mosquito)).